The sequence spans 414 residues: Carboxynorspermidine synthase (414 aa).

This sequence belongs to the saccharopine dehydrogenase family. Carboxynorspermidine synthase subfamily. As to quaternary structure, homodimer.

The enzyme catalyses carboxynorspermidine + NADP(+) + H2O = L-aspartate 4-semialdehyde + propane-1,3-diamine + NADPH + H(+). It catalyses the reaction carboxyspermidine + NADP(+) + H2O = L-aspartate 4-semialdehyde + putrescine + NADPH + H(+). With respect to regulation, activated by dithiothreitol and inhibited by SH-reactive compounds. Functionally, involved in norspermidine biosynthesis. Catalyzes the synthesis of carboxynorspermidine from L-aspartate 4-semialdehyde and 1,3-diaminopropane. Is also slightly active with putrescine as a substrate. This is Carboxynorspermidine synthase from Vibrio alginolyticus (strain ATCC 17749 / DSM 2171 / NBRC 15630 / NCIMB 1903 / NCTC 12160 / XII-53).